The chain runs to 198 residues: dCTP deaminase (198 aa).

Residues 99-104 (RSSLGR), 125-127 (TLE), and Gln-144 contribute to the dCTP site. The active-site Proton donor/acceptor is Glu-127.

It belongs to the dCTP deaminase family. As to quaternary structure, homotrimer.

It carries out the reaction dCTP + H2O + H(+) = dUTP + NH4(+). The protein operates within pyrimidine metabolism; dUMP biosynthesis; dUMP from dCTP (dUTP route): step 1/2. In terms of biological role, catalyzes the deamination of dCTP to dUTP. The chain is dCTP deaminase from Rhodopirellula baltica (strain DSM 10527 / NCIMB 13988 / SH1).